A 198-amino-acid polypeptide reads, in one-letter code: MLYLVLFLVPFNSIQITIYDQENFQGKRMEFTSSCPNVSERNFDNVRSLKVECGAWIGYEHTSFCGQQFILERGEYPRWDAWSGSNAYHIERLMSFRPICSANHKESKITIFEKENFIGRQWEICDDYPSLQAMGWFNNEVGSMKIQCGAWVCYQYPGYRGYQYILECDHHGGDYKHWPEWGSHAQTSQIQSIRRIQQ.

Residues 1 to 13 form an N-terminal arm region; sequence MLYLVLFLVPFNS. Beta/gamma crystallin 'Greek key' domains follow at residues 14-53 and 54-100; these read IQIT…KVEC and GAWI…RPIC. S-glutathionyl cysteine; alternate occurs at positions 65 and 100. Residues Cys-65 and Cys-100 each carry the S-methylcysteine; alternate modification. The interval 101–106 is connecting peptide; sequence SANHKE. Beta/gamma crystallin 'Greek key' domains are found at residues 107 to 148 and 149 to 197; these read SKIT…KIQC and GAWV…RRIQ.

Belongs to the beta/gamma-crystallin family. As to quaternary structure, homo/heterodimer, or complexes of higher-order. The structure of beta-crystallin oligomers seems to be stabilized through interactions between the N-terminal arms. Interacts with CRYBA1.

Functionally, crystallins are the dominant structural components of the vertebrate eye lens. The sequence is that of Beta-crystallin A1 from Mus musculus (Mouse).